A 196-amino-acid chain; its full sequence is CMRF35-like molecule 2 (196 aa).

A signal peptide spans 1-17 (MRLCAGLLLLCFQGCLS). The 105-residue stretch at 18-122 (LTGPGSVSGY…DSWSRDPSVS (105 aa)) folds into the Ig-like V-type domain. Over 18-171 (LTGPGSVSGY…QLWSLLSSIQ (154 aa)) the chain is Extracellular. The cysteines at positions 36 and 104 are disulfide-linked. Asn84 carries N-linked (GlcNAc...) asparagine glycosylation. The helical transmembrane segment at 172-192 (FQVLVFLKLPLFLSMLCAIFW) threads the bilayer. The Cytoplasmic portion of the chain corresponds to 193–196 (VNRL).

Belongs to the CD300 family. In terms of assembly, interacts with TYROBP.

It localises to the cell membrane. Probably acts as an activating receptor. This chain is CMRF35-like molecule 2 (Cd300e), found in Mus musculus (Mouse).